Consider the following 310-residue polypeptide: Porphobilinogen deaminase (310 aa).

Cys242 carries the S-(dipyrrolylmethanemethyl)cysteine modification.

This sequence belongs to the HMBS family. As to quaternary structure, monomer. Requires dipyrromethane as cofactor.

It carries out the reaction 4 porphobilinogen + H2O = hydroxymethylbilane + 4 NH4(+). The protein operates within porphyrin-containing compound metabolism; protoporphyrin-IX biosynthesis; coproporphyrinogen-III from 5-aminolevulinate: step 2/4. Tetrapolymerization of the monopyrrole PBG into the hydroxymethylbilane pre-uroporphyrinogen in several discrete steps. In Shewanella baltica (strain OS195), this protein is Porphobilinogen deaminase.